Consider the following 204-residue polypeptide: NAD(P)H-quinone oxidoreductase subunit M, chloroplastic (204 aa).

Residues 1–27 (MASTSMSLTRACKVHAVLACSIPSVSS) constitute a chloroplast transit peptide.

It belongs to the NDH complex subunit M family. As to quaternary structure, part of the chloroplast NDH complex, composed of a mixture of chloroplast and nucleus encoded subunits. Component of the NDH subcomplex A, at least composed of ndhH, ndhI, ndhJ, ndhK, ndhL, ndhM, ndhN and ndhO.

Its subcellular location is the plastid. It localises to the chloroplast thylakoid membrane. The enzyme catalyses a plastoquinone + NADH + (n+1) H(+)(in) = a plastoquinol + NAD(+) + n H(+)(out). It catalyses the reaction a plastoquinone + NADPH + (n+1) H(+)(in) = a plastoquinol + NADP(+) + n H(+)(out). Functionally, NDH shuttles electrons from NAD(P)H:plastoquinone, via FMN and iron-sulfur (Fe-S) centers, to quinones in the photosynthetic chain and possibly in a chloroplast respiratory chain. The immediate electron acceptor for the enzyme in this species is believed to be plastoquinone. Couples the redox reaction to proton translocation, and thus conserves the redox energy in a proton gradient. The chain is NAD(P)H-quinone oxidoreductase subunit M, chloroplastic from Physcomitrium patens (Spreading-leaved earth moss).